A 372-amino-acid chain; its full sequence is Queuine tRNA-ribosyltransferase (372 aa).

Catalysis depends on Asp92, which acts as the Proton acceptor. Substrate is bound by residues 92–96, Asp146, Gln188, and Gly215; that span reads DSGGF. An RNA binding region spans residues 246 to 252; the sequence is GIGTLRE. Asp265 functions as the Nucleophile in the catalytic mechanism. The RNA binding; important for wobble base 34 recognition stretch occupies residues 270–274; it reads TRLGR. Residues Cys303, Cys305, Cys308, and His334 each contribute to the Zn(2+) site.

Belongs to the queuine tRNA-ribosyltransferase family. As to quaternary structure, homodimer. Within each dimer, one monomer is responsible for RNA recognition and catalysis, while the other monomer binds to the replacement base PreQ1. Zn(2+) serves as cofactor.

It catalyses the reaction 7-aminomethyl-7-carbaguanine + guanosine(34) in tRNA = 7-aminomethyl-7-carbaguanosine(34) in tRNA + guanine. It participates in tRNA modification; tRNA-queuosine biosynthesis. Catalyzes the base-exchange of a guanine (G) residue with the queuine precursor 7-aminomethyl-7-deazaguanine (PreQ1) at position 34 (anticodon wobble position) in tRNAs with GU(N) anticodons (tRNA-Asp, -Asn, -His and -Tyr). Catalysis occurs through a double-displacement mechanism. The nucleophile active site attacks the C1' of nucleotide 34 to detach the guanine base from the RNA, forming a covalent enzyme-RNA intermediate. The proton acceptor active site deprotonates the incoming PreQ1, allowing a nucleophilic attack on the C1' of the ribose to form the product. After dissociation, two additional enzymatic reactions on the tRNA convert PreQ1 to queuine (Q), resulting in the hypermodified nucleoside queuosine (7-(((4,5-cis-dihydroxy-2-cyclopenten-1-yl)amino)methyl)-7-deazaguanosine). The polypeptide is Queuine tRNA-ribosyltransferase (Prochlorococcus marinus (strain MIT 9303)).